A 116-amino-acid chain; its full sequence is Ino eighty subunit 4 (116 aa).

Over residues 1-15 the composition is skewed to low complexity; that stretch reads MSQESSVLSESQEQL. Disordered stretches follow at residues 1 to 40 and 70 to 116; these read MSQE…PVLP and EERQ…GLDS. Residues 84 to 108 are compositionally biased toward basic and acidic residues; the sequence is KGSDDKATRKKEPADEDPEVKQLEK.

As to quaternary structure, component of the chromatin-remodeling INO80 complex, at least composed of ARP4, ARP5, ARP8, RVB1, RVB2, TAF14, NHP10, IES1, IES3, IES4, IES6, ACT1, IES2, IES5 and INO80.

It is found in the nucleus. The polypeptide is Ino eighty subunit 4 (IES4) (Saccharomyces cerevisiae (strain ATCC 204508 / S288c) (Baker's yeast)).